Consider the following 110-residue polypeptide: Nucleoid-associated protein CbuK_1603 (110 aa).

This sequence belongs to the YbaB/EbfC family. In terms of assembly, homodimer.

It localises to the cytoplasm. The protein resides in the nucleoid. Its function is as follows. Binds to DNA and alters its conformation. May be involved in regulation of gene expression, nucleoid organization and DNA protection. The protein is Nucleoid-associated protein CbuK_1603 of Coxiella burnetii (strain CbuK_Q154) (Coxiella burnetii (strain Q154)).